A 1704-amino-acid polypeptide reads, in one-letter code: Phospholipid-transporting ATPase ABCA3 (1704 aa).

N-linked (GlcNAc...) asparagine glycosylation is present at N14. The chain crosses the membrane as a helical span at residues 22 to 42 (VLVTVLELFLPLLFSGILIWL). N53, N124, N140, and N228 each carry an N-linked (GlcNAc...) asparagine glycan. 6 consecutive transmembrane segments (helical) span residues 261–283 (YQLP…RAVV), 307–327 (AWFL…TLLF), 344–364 (SLVL…SFMV), 373–393 (IAAA…FFVA), 405–425 (LLSC…IGKF), and 447–467 (FCFG…GLVT). The 234-residue stretch at 530–763 (IKIKHLSKVF…YGAGYHMTLV (234 aa)) folds into the ABC transporter 1 domain. ATP is bound at residue 566–573 (GHNGAGKT). An N-linked (GlcNAc...) asparagine glycan is attached at N620. The next 7 membrane-spanning stretches (helical) occupy residues 925-945 (MVAA…LAIH), 1100-1120 (IALN…ILAV), 1144-1164 (SALL…LVVF), 1183-1203 (LLLM…SFFF), 1213-1233 (LTIF…IMRI), 1245-1265 (LDHV…SNFY), and 1310-1330 (MAAS…NLLW). N-linked (GlcNAc...) asparagine glycosylation is present at N1350. The ABC transporter 2 domain occupies 1381-1614 (LIINELSKVY…FGSGYSLQAK (234 aa)). ATP is bound at residue 1416-1423 (GFNGAGKT).

This sequence belongs to the ABC transporter superfamily. ABCA family. As to quaternary structure, homooligomer; disulfide-linked. Post-translationally, N-glycosylated. Localization at intracellular vesicles is accompanied by processing of oligosaccharide from high mannose type to complex type. N-linked glycosylation at Asn-124 and Asn-140 is required for stability and efficient anterograde trafficking and prevents from proteasomal degradation. In terms of processing, proteolytically cleaved by CTSL and to a lower extent by CTSB within multivesicular bodies (MVB) and lamellar bodies (LB) leading to a mature form of 150 kDa. As to expression, highly expressed in the lung and moderately expressed in the kidney, adipose, macrophage, and spleen.

Its subcellular location is the endosome. It localises to the multivesicular body membrane. The protein resides in the cytoplasmic vesicle membrane. The protein localises to the late endosome membrane. It is found in the lysosome membrane. The catalysed reaction is a 1,2-diacyl-sn-glycero-3-phospho-(1'-sn-glycerol)(in) + ATP + H2O = a 1,2-diacyl-sn-glycero-3-phospho-(1'-sn-glycerol)(out) + ADP + phosphate + H(+). It catalyses the reaction a 1,2-diacyl-sn-glycero-3-phosphocholine(in) + ATP + H2O = a 1,2-diacyl-sn-glycero-3-phosphocholine(out) + ADP + phosphate + H(+). It carries out the reaction ATP + H2O + phospholipidSide 1 = ADP + phosphate + phospholipidSide 2.. The enzyme catalyses ATP + H2O + xenobioticSide 1 = ADP + phosphate + xenobioticSide 2.. The catalysed reaction is 1,2-dihexadecanoyl-sn-glycero-3-phosphocholine(in) + ATP + H2O = 1,2-dihexadecanoyl-sn-glycero-3-phosphocholine(out) + ADP + phosphate + H(+). It catalyses the reaction cholesterol(in) + ATP + H2O = cholesterol(out) + ADP + phosphate + H(+). Functionally, catalyzes the ATP-dependent transport of phospholipids such as phosphatidylcholine and phosphoglycerol from the cytoplasm into the lumen side of lamellar bodies, in turn participates in the lamellar bodies biogenesis and homeostasis of pulmonary surfactant. Transports preferentially phosphatidylcholine containing short acyl chains. In addition plays a role as an efflux transporter of miltefosine across macrophage membranes and free cholesterol (FC) through intralumenal vesicles by removing FC from the cell as a component of surfactant and protects cells from free cholesterol toxicity. The sequence is that of Phospholipid-transporting ATPase ABCA3 (Abca3) from Mus musculus (Mouse).